The sequence spans 125 residues: Ribosome-binding factor A (125 aa).

The protein belongs to the RbfA family. In terms of assembly, monomer. Binds 30S ribosomal subunits, but not 50S ribosomal subunits or 70S ribosomes.

The protein localises to the cytoplasm. In terms of biological role, one of several proteins that assist in the late maturation steps of the functional core of the 30S ribosomal subunit. Associates with free 30S ribosomal subunits (but not with 30S subunits that are part of 70S ribosomes or polysomes). Required for efficient processing of 16S rRNA. May interact with the 5'-terminal helix region of 16S rRNA. This is Ribosome-binding factor A from Wigglesworthia glossinidia brevipalpis.